Consider the following 352-residue polypeptide: Holliday junction branch migration complex subunit RuvB (352 aa).

The segment at 13–201 (FSLRKKELRL…FGISQKIEFY (189 aa)) is large ATPase domain (RuvB-L). ATP contacts are provided by residues arginine 41, glycine 82, lysine 85, threonine 86, threonine 87, 148 to 150 (EDF), arginine 191, tyrosine 201, and arginine 238. Position 86 (threonine 86) interacts with Mg(2+). The tract at residues 202–273 (TCDELKQIID…LIKKALNSYQ (72 aa)) is small ATPAse domain (RuvB-S). A head domain (RuvB-H) region spans residues 276-352 (EKGLDYVDRQ…KYIDSKNDNF (77 aa)). Residues arginine 330 and arginine 335 each coordinate DNA.

It belongs to the RuvB family. As to quaternary structure, homohexamer. Forms an RuvA(8)-RuvB(12)-Holliday junction (HJ) complex. HJ DNA is sandwiched between 2 RuvA tetramers; dsDNA enters through RuvA and exits via RuvB. An RuvB hexamer assembles on each DNA strand where it exits the tetramer. Each RuvB hexamer is contacted by two RuvA subunits (via domain III) on 2 adjacent RuvB subunits; this complex drives branch migration. In the full resolvosome a probable DNA-RuvA(4)-RuvB(12)-RuvC(2) complex forms which resolves the HJ.

It localises to the cytoplasm. The enzyme catalyses ATP + H2O = ADP + phosphate + H(+). Its function is as follows. The RuvA-RuvB-RuvC complex processes Holliday junction (HJ) DNA during genetic recombination and DNA repair, while the RuvA-RuvB complex plays an important role in the rescue of blocked DNA replication forks via replication fork reversal (RFR). RuvA specifically binds to HJ cruciform DNA, conferring on it an open structure. The RuvB hexamer acts as an ATP-dependent pump, pulling dsDNA into and through the RuvAB complex. RuvB forms 2 homohexamers on either side of HJ DNA bound by 1 or 2 RuvA tetramers; 4 subunits per hexamer contact DNA at a time. Coordinated motions by a converter formed by DNA-disengaged RuvB subunits stimulates ATP hydrolysis and nucleotide exchange. Immobilization of the converter enables RuvB to convert the ATP-contained energy into a lever motion, pulling 2 nucleotides of DNA out of the RuvA tetramer per ATP hydrolyzed, thus driving DNA branch migration. The RuvB motors rotate together with the DNA substrate, which together with the progressing nucleotide cycle form the mechanistic basis for DNA recombination by continuous HJ branch migration. Branch migration allows RuvC to scan DNA until it finds its consensus sequence, where it cleaves and resolves cruciform DNA. This is Holliday junction branch migration complex subunit RuvB from Prochlorococcus marinus (strain MIT 9312).